Consider the following 347-residue polypeptide: Histidinol-phosphate aminotransferase (347 aa).

Lys209 is subject to N6-(pyridoxal phosphate)lysine.

It belongs to the class-II pyridoxal-phosphate-dependent aminotransferase family. Histidinol-phosphate aminotransferase subfamily. In terms of assembly, homodimer. The cofactor is pyridoxal 5'-phosphate.

The catalysed reaction is L-histidinol phosphate + 2-oxoglutarate = 3-(imidazol-4-yl)-2-oxopropyl phosphate + L-glutamate. It functions in the pathway amino-acid biosynthesis; L-histidine biosynthesis; L-histidine from 5-phospho-alpha-D-ribose 1-diphosphate: step 7/9. The sequence is that of Histidinol-phosphate aminotransferase from Syntrophotalea carbinolica (strain DSM 2380 / NBRC 103641 / GraBd1) (Pelobacter carbinolicus).